Here is a 911-residue protein sequence, read N- to C-terminus: Valine--tRNA ligase (911 aa).

Residues P57–H67 carry the 'HIGH' region motif. Residues K599–S603 carry the 'KMSKS' region motif. K602 contributes to the ATP binding site. The interval E882–H911 is disordered.

Belongs to the class-I aminoacyl-tRNA synthetase family. ValS type 2 subfamily. Monomer.

The protein localises to the cytoplasm. It carries out the reaction tRNA(Val) + L-valine + ATP = L-valyl-tRNA(Val) + AMP + diphosphate. Its function is as follows. Catalyzes the attachment of valine to tRNA(Val). As ValRS can inadvertently accommodate and process structurally similar amino acids such as threonine, to avoid such errors, it has a 'posttransfer' editing activity that hydrolyzes mischarged Thr-tRNA(Val) in a tRNA-dependent manner. This Bifidobacterium longum (strain NCC 2705) protein is Valine--tRNA ligase.